A 576-amino-acid polypeptide reads, in one-letter code: Eukaryotic translation initiation factor 3 subunit D (576 aa).

Positions 103–176 (DSTKTRFGRG…KDYDKPQRNR (74 aa)) are disordered. Gly residues predominate over residues 110-122 (GRGGLARGRGQRG). A compositionally biased stretch (basic and acidic residues) spans 165–176 (GWKDYDKPQRNR). The segment at 304–318 (TLDMVTVNENAADAP) is RNA gate.

The protein belongs to the eIF-3 subunit D family. As to quaternary structure, component of the eukaryotic translation initiation factor 3 (eIF-3) complex.

The protein localises to the cytoplasm. In terms of biological role, mRNA cap-binding component of the eukaryotic translation initiation factor 3 (eIF-3) complex, which is involved in protein synthesis of a specialized repertoire of mRNAs and, together with other initiation factors, stimulates binding of mRNA and methionyl-tRNAi to the 40S ribosome. The eIF-3 complex specifically targets and initiates translation of a subset of mRNAs involved in cell proliferation. In the eIF-3 complex, eif3d specifically recognizes and binds the 7-methylguanosine cap of a subset of mRNAs. This is Eukaryotic translation initiation factor 3 subunit D from Botryotinia fuckeliana (strain B05.10) (Noble rot fungus).